A 188-amino-acid polypeptide reads, in one-letter code: Pyridoxal 5'-phosphate synthase subunit PdxT (188 aa).

An L-glutamine-binding site is contributed by 46-48; sequence GES. Residue Cys-78 is the Nucleophile of the active site. L-glutamine-binding positions include Arg-105 and 134 to 135; that span reads IR. Catalysis depends on charge relay system residues His-170 and Glu-172.

Belongs to the glutaminase PdxT/SNO family. In terms of assembly, in the presence of PdxS, forms a dodecamer of heterodimers. Only shows activity in the heterodimer.

The enzyme catalyses aldehydo-D-ribose 5-phosphate + D-glyceraldehyde 3-phosphate + L-glutamine = pyridoxal 5'-phosphate + L-glutamate + phosphate + 3 H2O + H(+). It catalyses the reaction L-glutamine + H2O = L-glutamate + NH4(+). It functions in the pathway cofactor biosynthesis; pyridoxal 5'-phosphate biosynthesis. Catalyzes the hydrolysis of glutamine to glutamate and ammonia as part of the biosynthesis of pyridoxal 5'-phosphate. The resulting ammonia molecule is channeled to the active site of PdxS. In Thermotoga petrophila (strain ATCC BAA-488 / DSM 13995 / JCM 10881 / RKU-1), this protein is Pyridoxal 5'-phosphate synthase subunit PdxT.